A 199-amino-acid polypeptide reads, in one-letter code: Dephospho-CoA kinase (199 aa).

One can recognise a DPCK domain in the interval 2–199 (KIAVTGGYSS…FVADRIEKKK (198 aa)). Position 10–15 (10–15 (SSGKSS)) interacts with ATP.

It belongs to the CoaE family.

Its subcellular location is the cytoplasm. It catalyses the reaction 3'-dephospho-CoA + ATP = ADP + CoA + H(+). It functions in the pathway cofactor biosynthesis; coenzyme A biosynthesis; CoA from (R)-pantothenate: step 5/5. Functionally, catalyzes the phosphorylation of the 3'-hydroxyl group of dephosphocoenzyme A to form coenzyme A. In Desulfotalea psychrophila (strain LSv54 / DSM 12343), this protein is Dephospho-CoA kinase.